The sequence spans 58 residues: Large ribosomal subunit protein eL24 (58 aa).

The Zn(2+) site is built by Cys6, Cys9, Cys32, and Cys36. The segment at 6-36 adopts a C4-type zinc-finger fold; the sequence is CSFCGAEIPPGYGIMYVRNDGTIQRYCSRKC.

This sequence belongs to the eukaryotic ribosomal protein eL24 family. Part of the 50S ribosomal subunit. Forms a cluster with proteins L3 and L14. Zn(2+) is required as a cofactor.

Functionally, binds to the 23S rRNA. The chain is Large ribosomal subunit protein eL24 from Pyrobaculum neutrophilum (strain DSM 2338 / JCM 9278 / NBRC 100436 / V24Sta) (Thermoproteus neutrophilus).